The following is a 413-amino-acid chain: 3-oxoacyl-[acyl-carrier-protein] synthase 2 (413 aa).

The region spanning 3 to 412 is the Ketosynthase family 3 (KS3) domain; the sequence is KRRVVVTGLG…GTNGSLIFKK (410 aa). Active-site for beta-ketoacyl synthase activity residues include cysteine 164, histidine 304, and histidine 341.

It belongs to the thiolase-like superfamily. Beta-ketoacyl-ACP synthases family. Homodimer.

The enzyme catalyses a fatty acyl-[ACP] + malonyl-[ACP] + H(+) = a 3-oxoacyl-[ACP] + holo-[ACP] + CO2. It carries out the reaction (9Z)-hexadecenoyl-[ACP] + malonyl-[ACP] + H(+) = 3-oxo-(11Z)-octadecenoyl-[ACP] + holo-[ACP] + CO2. The protein operates within lipid metabolism; fatty acid biosynthesis. Involved in the type II fatty acid elongation cycle. Catalyzes the elongation of a wide range of acyl-ACP by the addition of two carbons from malonyl-ACP to an acyl acceptor. Can efficiently catalyze the conversion of palmitoleoyl-ACP (cis-hexadec-9-enoyl-ACP) to cis-vaccenoyl-ACP (cis-octadec-11-enoyl-ACP), an essential step in the thermal regulation of fatty acid composition. In Escherichia coli O157:H7, this protein is 3-oxoacyl-[acyl-carrier-protein] synthase 2 (fabF).